The following is a 37-amino-acid chain: U10-ctenitoxin-Co1a (37 aa).

4 disulfide bridges follow: C2–C17, C9–C22, C16–C33, and C24–C31.

As to expression, expressed by the venom gland.

Its subcellular location is the secreted. Functionally, antagonist of L-type calcium channels (Cav1/CACNA1). The polypeptide is U10-ctenitoxin-Co1a (Ctenus ornatus (Brazilian spider)).